Consider the following 463-residue polypeptide: NADH dehydrogenase [ubiquinone] iron-sulfur protein 2, mitochondrial (463 aa).

The transit peptide at 1–33 directs the protein to the mitochondrion; it reads MAALRVLCGLRGVAAQVLRPGAGVRLPIQPSRG. K62 carries the post-translational modification N6-acetyllysine. Symmetric dimethylarginine is present on R118. [4Fe-4S] cluster contacts are provided by C326, C332, and C347.

This sequence belongs to the complex I 49 kDa subunit family. In terms of assembly, core subunit of respiratory chain NADH dehydrogenase (Complex I) which is composed of 45 different subunits. Component of the iron-sulfur (IP) fragment of the enzyme. Interacts with NDUFAF3. Interacts with NDUFAF7. Interacts with CERS2. [4Fe-4S] cluster is required as a cofactor. Dimethylation at Arg-118 by NDUFAF7 takes place after NDUFS2 assembles into the complex I, leading to stabilize the early intermediate complex.

The protein localises to the mitochondrion inner membrane. The enzyme catalyses a ubiquinone + NADH + 5 H(+)(in) = a ubiquinol + NAD(+) + 4 H(+)(out). Core subunit of the mitochondrial membrane respiratory chain NADH dehydrogenase (Complex I) which catalyzes electron transfer from NADH through the respiratory chain, using ubiquinone as an electron acceptor. Essential for the catalytic activity and assembly of complex I. Redox-sensitive, critical component of the oxygen-sensing pathway in the pulmonary vasculature which plays a key role in acute pulmonary oxygen-sensing and hypoxic pulmonary vasoconstriction. Plays an important role in carotid body sensing of hypoxia. Essential for glia-like neural stem and progenitor cell proliferation, differentiation and subsequent oligodendrocyte or neuronal maturation. In Gorilla gorilla gorilla (Western lowland gorilla), this protein is NADH dehydrogenase [ubiquinone] iron-sulfur protein 2, mitochondrial (NDUFS2).